The following is a 556-amino-acid chain: Zinc finger protein 18 (556 aa).

An SCAN box domain is found at 41–123 (RQLFRQFRYQ…TLVESLKGDP (83 aa)). Residues 169 to 195 (QDLPLQNTSSAPGELLSHGVKEESDLE) are disordered. The KRAB domain maps to 218–291 (EVGTALLPSL…HLHSAEKMAR (74 aa)). C2H2-type zinc fingers lie at residues 415-437 (PTCR…QRTH), 443-465 (FHCR…QRTH), 471-493 (CKCD…EKIH), 499-521 (YKCP…QRVH), and 527-549 (YKCT…QRSH).

This sequence belongs to the krueppel C2H2-type zinc-finger protein family.

It localises to the nucleus. In terms of biological role, may be involved in transcriptional regulation. This chain is Zinc finger protein 18 (Znf18), found in Rattus norvegicus (Rat).